Here is a 288-residue protein sequence, read N- to C-terminus: Cyclin-dependent kinase 2 homolog (288 aa).

The region spanning Y4–F284 is the Protein kinase domain. ATP contacts are provided by residues I10–V18 and K32. At T14 the chain carries Phosphothreonine. Y15 carries the post-translational modification Phosphotyrosine. Residue D125 is the Proton acceptor of the active site. T158 bears the Phosphothreonine mark.

The protein belongs to the protein kinase superfamily. CMGC Ser/Thr protein kinase family. CDC2/CDKX subfamily. May form a complex composed of at least the catalytic subunit CRK2 and a cyclin. Mg(2+) is required as a cofactor.

It localises to the cytoplasm. It catalyses the reaction L-seryl-[protein] + ATP = O-phospho-L-seryl-[protein] + ADP + H(+). It carries out the reaction L-threonyl-[protein] + ATP = O-phospho-L-threonyl-[protein] + ADP + H(+). The enzyme catalyses [DNA-directed RNA polymerase] + ATP = phospho-[DNA-directed RNA polymerase] + ADP + H(+). Its activity is regulated as follows. Phosphorylation at Thr-14 or Tyr-15 inactivates the enzyme, while phosphorylation at Thr-158 activates it. Serine/threonine-protein kinase. Involved in the control of the cell cycle. Required for entry into S-phase and mitosis. Probable component of the kinase complex that phosphorylates the repetitive C-terminus of RNA polymerase II. In Plasmodium vivax, this protein is Cyclin-dependent kinase 2 homolog.